The sequence spans 52 residues: Light-harvesting protein B-870 alpha chain (52 aa).

The Cytoplasmic segment spans residues 1–15 (MAKFYKIWLIFDPRR). The helical transmembrane segment at 16–36 (VFVAQGVFLFLLAAMIHLVVL) threads the bilayer. Histidine 32 is a binding site for a bacteriochlorophyll. Residues 37–52 (SSGLNWFEAAAAVGGQ) are Periplasmic-facing.

This sequence belongs to the antenna complex alpha subunit family. As to quaternary structure, the core complex is formed by different alpha and beta chains, binding bacteriochlorophyll molecules, and arranged most probably in tetrameric structures disposed around the reaction center. The non-pigmented gamma chains may constitute additional components.

The protein resides in the cell inner membrane. Its function is as follows. Antenna complexes are light-harvesting systems, which transfer the excitation energy to the reaction centers. The protein is Light-harvesting protein B-870 alpha chain (pufA) of Roseobacter denitrificans (strain ATCC 33942 / OCh 114) (Erythrobacter sp. (strain OCh 114)).